The chain runs to 395 residues: Probable hercynylcysteine sulfoxide lyase (395 aa).

The tract at residues 1 to 21 (MQDEAMRRSGANSPAGDSLAD) is disordered. The residue at position 220 (Lys-220) is an N6-(pyridoxal phosphate)lysine.

It belongs to the class-V pyridoxal-phosphate-dependent aminotransferase family. EgtE subfamily. Pyridoxal 5'-phosphate serves as cofactor.

The catalysed reaction is S-(hercyn-2-yl)-L-cysteine S-oxide + AH2 + H(+) = ergothioneine + pyruvate + A + NH4(+). It participates in amino-acid biosynthesis; ergothioneine biosynthesis. Its function is as follows. Probably catalyzes the conversion of hercynylcysteine sulfoxide to ergothioneine. ERG is one of the major redox buffers which protects bacteria against redox stressors and antibiotics; loss of ERG or mycothiol (MSH, the other major redox buffer in this bacteria) leads to respiratory alterations and bioenergetic deficiencies that negatively impact virulence. This Mycobacterium tuberculosis (strain CDC 1551 / Oshkosh) protein is Probable hercynylcysteine sulfoxide lyase.